Reading from the N-terminus, the 393-residue chain is MPRIGTPLSPTATRVLLCGSGELGKEVVIELQRLGCEVIAVDRYPNAPAMQVAHRNHVISMLDGAALRAVIEQEKPHYIVPEIEAIATATLVELEAEGYTVIPTARAAQLTMNREGIRRLAAEELGLPTSPYRFADSYEDYAAAVAALGFPCVVKPIMSSSGKGQSLLRGPDDVKKAWDYAQEGGRAGKGRVIVEGFIDFDYEITLLTVRHAGGTTFCAPVGHRQEKGDYQESWQPQPMSAKAIAESERIALAVTGALGGRGLFGVELFIKGDMVWFSEVSPRPHDTGLVTLISQDLSEFALHARAILGLPIPAIRQVGPSASAVILVEGESTQPSFSNLGAALAEPDTALRLFGKPEVKGQRRMGVALARDESIEAARAKALRAAQAVKVEL.

Residues 22 to 23 (EL) and Glu-82 each bind N(1)-(5-phospho-beta-D-ribosyl)glycinamide. Residues Arg-114, Lys-155, 160–165 (SSGKGQ), 195–198 (EGFI), and Glu-203 contribute to the ATP site. Residues 119 to 308 (RLAAEELGLP…EFALHARAIL (190 aa)) form the ATP-grasp domain. Residues Glu-267 and Glu-279 each contribute to the Mg(2+) site. Residues Asp-286, Lys-356, and 363 to 364 (RR) contribute to the N(1)-(5-phospho-beta-D-ribosyl)glycinamide site.

The protein belongs to the PurK/PurT family. Homodimer.

It catalyses the reaction N(1)-(5-phospho-beta-D-ribosyl)glycinamide + formate + ATP = N(2)-formyl-N(1)-(5-phospho-beta-D-ribosyl)glycinamide + ADP + phosphate + H(+). The protein operates within purine metabolism; IMP biosynthesis via de novo pathway; N(2)-formyl-N(1)-(5-phospho-D-ribosyl)glycinamide from N(1)-(5-phospho-D-ribosyl)glycinamide (formate route): step 1/1. Its function is as follows. Involved in the de novo purine biosynthesis. Catalyzes the transfer of formate to 5-phospho-ribosyl-glycinamide (GAR), producing 5-phospho-ribosyl-N-formylglycinamide (FGAR). Formate is provided by PurU via hydrolysis of 10-formyl-tetrahydrofolate. The polypeptide is Formate-dependent phosphoribosylglycinamide formyltransferase (Azoarcus sp. (strain BH72)).